The chain runs to 510 residues: ATP synthase subunit alpha (510 aa).

170–177 (GDRQTGKT) provides a ligand contact to ATP.

Belongs to the ATPase alpha/beta chains family. As to quaternary structure, F-type ATPases have 2 components, CF(1) - the catalytic core - and CF(0) - the membrane proton channel. CF(1) has five subunits: alpha(3), beta(3), gamma(1), delta(1), epsilon(1). CF(0) has three main subunits: a(1), b(2) and c(9-12). The alpha and beta chains form an alternating ring which encloses part of the gamma chain. CF(1) is attached to CF(0) by a central stalk formed by the gamma and epsilon chains, while a peripheral stalk is formed by the delta and b chains.

It is found in the cell inner membrane. It catalyses the reaction ATP + H2O + 4 H(+)(in) = ADP + phosphate + 5 H(+)(out). Produces ATP from ADP in the presence of a proton gradient across the membrane. The alpha chain is a regulatory subunit. The polypeptide is ATP synthase subunit alpha (Caulobacter vibrioides (strain ATCC 19089 / CIP 103742 / CB 15) (Caulobacter crescentus)).